An 81-amino-acid polypeptide reads, in one-letter code: Large ribosomal subunit protein bL31B (81 aa).

This sequence belongs to the bacterial ribosomal protein bL31 family. Type B subfamily. Part of the 50S ribosomal subunit.

The sequence is that of Large ribosomal subunit protein bL31B from Listeria innocua serovar 6a (strain ATCC BAA-680 / CLIP 11262).